Reading from the N-terminus, the 170-residue chain is Adenine phosphoribosyltransferase (170 aa).

Belongs to the purine/pyrimidine phosphoribosyltransferase family. As to quaternary structure, homodimer.

The protein localises to the cytoplasm. The enzyme catalyses AMP + diphosphate = 5-phospho-alpha-D-ribose 1-diphosphate + adenine. It functions in the pathway purine metabolism; AMP biosynthesis via salvage pathway; AMP from adenine: step 1/1. Functionally, catalyzes a salvage reaction resulting in the formation of AMP, that is energically less costly than de novo synthesis. The chain is Adenine phosphoribosyltransferase from Thermosipho africanus (strain TCF52B).